The sequence spans 341 residues: Serine/threonine-protein kinase pdik1l (341 aa).

The region spanning 8–332 (YELIQEVGRG…FELELRLVRI (325 aa)) is the Protein kinase domain. Position 14-22 (14-22 (VGRGSYGVV)) interacts with ATP. Aspartate 164 acts as the Proton acceptor in catalysis.

It belongs to the protein kinase superfamily. Ser/Thr protein kinase family.

Its subcellular location is the nucleus. It catalyses the reaction L-seryl-[protein] + ATP = O-phospho-L-seryl-[protein] + ADP + H(+). The catalysed reaction is L-threonyl-[protein] + ATP = O-phospho-L-threonyl-[protein] + ADP + H(+). In Danio rerio (Zebrafish), this protein is Serine/threonine-protein kinase pdik1l (pdik1l).